Here is a 579-residue protein sequence, read N- to C-terminus: A-type ATP synthase subunit A (579 aa).

ATP is bound at residue 229–236; sequence GPFGSGKT.

Belongs to the ATPase alpha/beta chains family. As to quaternary structure, has multiple subunits with at least A(3), B(3), C, D, E, F, H, I and proteolipid K(x).

It localises to the cell membrane. The enzyme catalyses ATP + H2O + 4 H(+)(in) = ADP + phosphate + 5 H(+)(out). Component of the A-type ATP synthase that produces ATP from ADP in the presence of a proton gradient across the membrane. The A chain is the catalytic subunit. The polypeptide is A-type ATP synthase subunit A (Methanocella arvoryzae (strain DSM 22066 / NBRC 105507 / MRE50)).